Here is a 72-residue protein sequence, read N- to C-terminus: ATP synthase subunit c (72 aa).

Helical transmembrane passes span 1–21 (MSLGVLAAAIAVGLGALGAGI) and 48–68 (MFIGVALVEALPIIGVVFSFI).

The protein belongs to the ATPase C chain family. F-type ATPases have 2 components, F(1) - the catalytic core - and F(0) - the membrane proton channel. F(1) has five subunits: alpha(3), beta(3), gamma(1), delta(1), epsilon(1). F(0) has three main subunits: a(1), b(2) and c(10-14). The alpha and beta chains form an alternating ring which encloses part of the gamma chain. F(1) is attached to F(0) by a central stalk formed by the gamma and epsilon chains, while a peripheral stalk is formed by the delta and b chains.

It is found in the cell membrane. In terms of biological role, f(1)F(0) ATP synthase produces ATP from ADP in the presence of a proton or sodium gradient. F-type ATPases consist of two structural domains, F(1) containing the extramembraneous catalytic core and F(0) containing the membrane proton channel, linked together by a central stalk and a peripheral stalk. During catalysis, ATP synthesis in the catalytic domain of F(1) is coupled via a rotary mechanism of the central stalk subunits to proton translocation. Functionally, key component of the F(0) channel; it plays a direct role in translocation across the membrane. A homomeric c-ring of between 10-14 subunits forms the central stalk rotor element with the F(1) delta and epsilon subunits. The protein is ATP synthase subunit c of Geobacillus stearothermophilus (Bacillus stearothermophilus).